The chain runs to 396 residues: Fumarate--(S)-2,3-diaminopropanoate ligase (396 aa).

The enzyme catalyses (S)-2,3-diaminopropanoate + fumarate + ATP = N(3)-fumaroyl-(S)-2,3-diaminopropanoate + AMP + diphosphate. It participates in antibiotic biosynthesis. Involved in dapdiamide antibiotics biosynthesis. Ligates fumarate and 2,3-diaminopropionate (DAP) to form N-beta-fumaroyl-DAP. Can also form N-succinoyl-DAP from succinate and DAP, with lower efficiency. In Enterobacter agglomerans (Erwinia herbicola), this protein is Fumarate--(S)-2,3-diaminopropanoate ligase.